The following is a 439-amino-acid chain: Sex-determination protein fem-3 (439 aa).

The interval 21–45 (RRLKRKANDDDDDDETVRERVDDAE) is disordered.

In terms of assembly, component of a complex containing fem-1, fem-2 and fem-3. Interacts with fem-1 and fem-2 (via N-terminus). Part of a E3 ubiquitin-protein ligase complex, at least composed of cul-2, elc-1, tra-1, fem-1, fem-2 and fem-3; mediates the ubiquitination and subsequent proteasomal degradation of tra-1. Interacts with tra-1. Interacts with sel-10. Interacts with tra-2.

Functionally, required for male development. In XO (male) animals, fem-3 directs male differentiation in all tissues. In XX (hermaphrodite) animals, it specifies the first 80 or so germ cells to be sperm. Negatively regulates male development when bound to tra-2. Together with fem-2 associates with the CBC(fem-1) E3 ubiquitin-protein ligase complex which mediates the ubiquitination and subsequent proteasomal degradation of tra-1. This Caenorhabditis remanei (Caenorhabditis vulgaris) protein is Sex-determination protein fem-3.